The primary structure comprises 501 residues: E3 ubiquitin-protein ligase TRIM35 (501 aa).

Position 1 is an N-acetylmethionine (Met1). Position 8 is a phosphoserine (Ser8). The RING-type zinc finger occupies 21-61; the sequence is CAVCYDPFRDAVTLRCGHNFCRRCVSGCWEVQTTPSCPVCK. The B box-type zinc-finger motif lies at 96–137; sequence RSPRPCRAHRAPLTLFCLEDKELLCCACQADARHQEHRVQPI. Zn(2+) contacts are provided by Cys101, His104, Cys123, and His129. The stretch at 200–252 forms a coiled coil; it reads VEEQATLDAMKEESRKKHLQAEEKMKQLAEQTEALAREIERLQMEMKEDDMTF. A B30.2/SPRY domain is found at 284-495; that stretch reads LESLQYRVWK…LRICHLRVSI (212 aa).

This sequence belongs to the TRIM/RBCC family. As to quaternary structure, interacts with PKM isoform M2, but not isoform M1; this interaction may compete with that between PKM and FGFR1, and hence reduces FGFR1-dependent tyrosine phosphorylation of PKM. Interacts with IRF7; this interaction promotes IRF7 proteasomal degradation. Interacts with TRAF3; this interaction promotes TRAF3 activation. As to expression, widely expressed. Highly expressed in brain, heart, kidney, spleen, skeletal muscle, lung and thymus. Lower expression found in stomach, large intestine and bone marrow.

Its subcellular location is the cytoplasm. It localises to the nucleus. It carries out the reaction S-ubiquitinyl-[E2 ubiquitin-conjugating enzyme]-L-cysteine + [acceptor protein]-L-lysine = [E2 ubiquitin-conjugating enzyme]-L-cysteine + N(6)-ubiquitinyl-[acceptor protein]-L-lysine.. The protein operates within protein modification; protein ubiquitination. E3 ubiquitin-protein ligase that participates in multiple biological processes including cell death, glucose metabolism, and in particular, the innate immune response. Mediates 'Lys-63'-linked polyubiquitination of TRAF3 thereby promoting type I interferon production via RIG-I signaling pathway. Can also catalyze 'Lys-48'-linked polyubiquitination and proteasomal degradation of viral proteins such as influenza virus PB2. Acts as a negative feedback regulator of TLR7- and TLR9-triggered signaling. Mechanistically, promotes the 'Lys-48'-linked ubiquitination of IRF7 and induces its degradation via a proteasome-dependent pathway. Reduces FGFR1-dependent tyrosine phosphorylation of PKM, inhibiting PKM-dependent lactate production, glucose metabolism, and cell growth. The sequence is that of E3 ubiquitin-protein ligase TRIM35 (Trim35) from Mus musculus (Mouse).